The following is a 208-amino-acid chain: CASP-like protein 2A1 (208 aa).

At 1 to 36 the chain is on the cytoplasmic side; that stretch reads MSKMAEQKAAAVDGLGGAGAADAAPAGEAAAARVRP. Residues 37–57 form a helical membrane-spanning segment; it reads VETLLRAAPLGLCVAAMTVML. At 58–78 the chain is on the extracellular side; it reads RDQQSNEYGTVAYSDLGGFKY. Residues 79 to 99 form a helical membrane-spanning segment; sequence LVYANGLCAAYSLVSAFYTAV. Topologically, residues 100 to 108 are cytoplasmic; that stretch reads PRPATVSRS. Residues 109 to 129 form a helical membrane-spanning segment; that stretch reads WVVFLLDQVFTYLILAAGAAA. Residues 130–161 lie on the Extracellular side of the membrane; sequence AELLYLAYNGDKEVTWSEACGVFGSFCRQART. The chain crosses the membrane as a helical span at residues 162–182; sequence SVAITFGTVLCFILLSLISSY. Topologically, residues 183–208 are cytoplasmic; sequence RLFSAYEAPPSSALGSKGVEIAAYPR.

The protein belongs to the Casparian strip membrane proteins (CASP) family. As to quaternary structure, homodimer and heterodimers.

It is found in the cell membrane. The protein is CASP-like protein 2A1 of Sorghum bicolor (Sorghum).